The chain runs to 434 residues: CinA-like protein (434 aa).

This sequence belongs to the CinA family.

The protein is CinA-like protein of Mycobacterium avium (strain 104).